We begin with the raw amino-acid sequence, 1717 residues long: MLASKHTPWRRLQGISFGMYSAEELKKLSVKSITNPRYVDYLGNPSANGLYDLALGPADSKEVCATCVQDFNNCSGHLGHIDLPLTVYNPFLFDKLYLLLRGSCLSCHMLTCPRAAIYLLISQLRVLEVGALQAVYELERILSRFLEETGDPSAFEIQEELEEYTSKILQNNLLGSQGTHVKNVCESRSKLVAQFWKTHMAAKQCPHCKTGRSVVRKEHNSKLIITYPATVHKKSDQEGTELPEGVPEAPGIDKAQMGKRGYLTPSSAQEHLFAIWKNEGFFLNYLFSGLDDIGPESSFNPSMFFLDFIVVPPSRYRPVNRLGDQMFTNGQTVNLQAVMKDAVLIRKLLALMAQEQKLPCEMTELTIDKENDSSVAIDRSFLGLLPGPSLTDKLYNIWIRLQSHVNIVFDSEMDKLMLEKYPGIRQILEKKEGLFRKHMMGKRVDYAARSVICPDMYINTNEIGIPMVFATKLTYPQPVTPWNVQELRQAVINGPNVHPGASMVINEDGSRTALSSVDAAQREAVAKQLLTPATGAPKPQGTKVVCRHVKNGDILLLNRQPTLHRPSIQAHRARILPEEKVLRLHYANCKAYNADFDGDEMNAHFPQSELGRAEAYVLACTDQQYLVPKDGQPLAGLIQDHMVSGANMTIRGCFFTREQYMELVYRGLTDKVGRVKLFPPAILKPFPLWTGKQVVSTLLINIIPEDYAPLNLSGKAKIGSKAWVKEKPRPIPDFDPDSMCESQVIIREGELLCGVLDKAHYGSSAYGLVHCCYEIYGGETSGRVLTCLARLFTAYLQLYRGFTLGVEDILVKPNADVVRQRIIEESTQCGPQAVKAALSLPETASCDEIQGKWQDAHLSKDQRDFNMIDMKFKEEVNHYSNEINKACMPLGLHRQFPENNLQMMVQSGAKGSTVNTMQISCLLGQIELEGRRPPLMASGKSLPCFEPYEFTPRAGGFVTGRFLTGIRPPEFFFHCMAGREGLVDTAVKTSRSGYLQRCIIKHLEGLVIQYDLTVRDSDGSVVQFLYGEDGLDIPKTQFLQPKQFPFLAGNYEVIMKSKHLHEVLSRADPQKVLGHIKAIKKWHHKHSGALLRKGAFLSFSQKIQAAVKALNLKGSIQNGRSPETQQMLQMWYDLDEESRWKYQKRAAPCPDPSLSVWRPDIYFASVSETFEKKIDDFSQEWAAQAERSYKKSELSLDRLRTLLQLKWQRSLCDPGEAVGLLAAQSIGEPSTQMTLNTFHFAGRGEMNVTLGIPRLREILMVASANIKTPMMSVPVFDTKKALKKVKSLKKRLTRVCLGEVLQKVDIQESFCMGEKRNKFQVYELRFQFLPHAYYQQEKCLRPEDILHFMETRFFKLLMEAIKKKKNKASAFRNVNSRRATQKDLNDTEDSGRSQREEERDEEEEGNIVDAEAEEGDADASDTKRKEKQEEEVDYESEEEGEEEEEEEVQEEGNIKGDGVHQGHEPDEEEHLGLEEEESSQKPPRRHSRPQGAEAIKRRIQAVRESYSFIEDYQYDTEESLWCQVTVKLPLMKINFDMSSLVVSLAHKAIVYTTKGITRCLLNETTNSKNEKELVLNTEGINLPELFKYSEILDLRRLYSNDIHAMANTYGIEAALRVIEKEIKDVFAVYGIAVDPRHLSLVADYMCFEGVYKPLNRFGIQSSSSPLQQMTFETSFQFLKQATMMGSHDELKSPSACLVVGKVVKGGTGLFELKQPLR.

Zn(2+) is bound by residues cysteine 64, cysteine 67, cysteine 74, histidine 77, cysteine 104, and cysteine 107. The clamp stretch occupies residues 110 to 201 (LTCPRAAIYL…VAQFWKTHMA (92 aa)). Zn(2+)-binding residues include cysteine 205 and cysteine 208. The segment at 327 to 433 (FTNGQTVNLQ…IRQILEKKEG (107 aa)) is clamp. Residues 410–423 (DSEMDKLMLEKYPG) form a rudder region. The DNA site is built by lysine 431, arginine 436, and arginine 443. The involved in RRN3 binding to Pol I complex stretch occupies residues 475 to 549 (YPQPVTPWNV…QGTKVVCRHV (75 aa)). Arginine 559 serves as a coordination point for RNA. Positions 595, 597, and 599 each coordinate Mg(2+). Aspartate 599 is an RNA binding site. Positions 812–890 (KPNADVVRQR…NEINKACMPL (79 aa)) are funnel. Residues 967–1008 (RPPEFFFHCMAGREGLVDTAVKTSRSGYLQRCIIKHLEGLVI) are bridging helix. Positions 1067–1162 (ADPQKVLGHI…SLSVWRPDIY (96 aa)) are mediates the interaction with TOP2A. The tract at residues 1214–1255 (PGEAVGLLAAQSIGEPSTQMTLNTFHFAGRGEMNVTLGIPRL) is trigger loop. Position 1256 (arginine 1256) interacts with DNA. Positions 1372 to 1493 (RNVNSRRATQ…RRHSRPQGAE (122 aa)) are disordered. Basic and acidic residues predominate over residues 1380-1397 (TQKDLNDTEDSGRSQREE). Residue serine 1393 is modified to Phosphoserine. Acidic residues-rich tracts occupy residues 1398–1419 (ERDE…DADA) and 1429–1450 (EEEV…EVQE). Residues 1452-1464 (GNIKGDGVHQGHE) are compositionally biased toward basic and acidic residues. The span at 1465 to 1477 (PDEEEHLGLEEEE) shows a compositional bias: acidic residues.

The protein belongs to the RNA polymerase beta' chain family. As to quaternary structure, component of the RNA polymerase I (Pol I) complex consisting of 13 subunits: a ten-subunit catalytic core composed of POLR1A/RPA1, POLR1B/RPA2, POLR1C/RPAC1, POLR1D/RPAC2, POLR1H/RPA12, POLR2E/RPABC1, POLR2F/RPABC2, POLR2H/RPABC3, POLR2K/RPABC4 and POLR2L/RPABC5; a mobile stalk subunit POLR1F/RPA43 protruding from the core and additional subunits homologous to general transcription factors POLR1E/RPA49 and POLR1G/RPA34. Part of Pol I pre-initiation complex (PIC), in which Pol I core assembles with RRN3 and promoter-bound UTBF and SL1/TIF-IB complex. Interacts (via dock II domain) with TOP2A; this interaction may assist Pol I transcription initiation by releasing supercoils occurring during DNA unwinding. Interacts with CAVIN1; this interaction induces the dissociation of Pol I complex paused at rDNA terminator sequences. Interacts with MYO1C. Interacts with ERBB2. Interacts with DDX11. Interacts with RECQL5. Mg(2+) is required as a cofactor. In terms of processing, phosphorylated.

The protein localises to the nucleus. It localises to the nucleolus. The protein resides in the chromosome. The catalysed reaction is RNA(n) + a ribonucleoside 5'-triphosphate = RNA(n+1) + diphosphate. Functionally, catalytic core component of RNA polymerase I (Pol I), a DNA-dependent RNA polymerase which synthesizes ribosomal RNA precursors using the four ribonucleoside triphosphates as substrates. Transcribes 47S pre-rRNAs from multicopy rRNA gene clusters, giving rise to 5.8S, 18S and 28S ribosomal RNAs. Pol I-mediated transcription cycle proceeds through transcription initiation, transcription elongation and transcription termination stages. During transcription initiation, Pol I pre-initiation complex (PIC) is recruited by the selectivity factor 1 (SL1/TIF-IB) complex bound to the core promoter that precedes an rDNA repeat unit. The PIC assembly bends the promoter favoring the formation of the transcription bubble and promoter escape. Once the polymerase has escaped from the promoter it enters the elongation phase during which RNA is actively polymerized, based on complementarity with the template DNA strand. Highly processive, assembles in structures referred to as 'Miller trees' where many elongating Pol I complexes queue and transcribe the same rDNA coding regions. At terminator sequences downstream of the rDNA gene, PTRF interacts with Pol I and halts Pol I transcription leading to the release of the RNA transcript and polymerase from the DNA. Forms Pol I active center together with the second largest subunit POLR1B/RPA2. Appends one nucleotide at a time to the 3' end of the nascent RNA, with POLR1A/RPA1 contributing a Mg(2+)-coordinating DxDGD motif, and POLR1B/RPA2 participating in the coordination of a second Mg(2+) ion and providing lysine residues believed to facilitate Watson-Crick base pairing between the incoming nucleotide and the template base. Typically, Mg(2+) ions direct a 5' nucleoside triphosphate to form a phosphodiester bond with the 3' hydroxyl of the preceding nucleotide of the nascent RNA, with the elimination of pyrophosphate. Has proofreading activity: Pauses and backtracks to allow the cleavage of a missincorporated nucleotide via POLR1H/RPA12. High Pol I processivity is associated with decreased transcription fidelity. The chain is DNA-directed RNA polymerase I subunit RPA1 from Mus musculus (Mouse).